The sequence spans 491 residues: UDP-N-acetylmuramate--L-alanine ligase (491 aa).

126-132 is a binding site for ATP; sequence GTHGKTT.

The protein belongs to the MurCDEF family.

It is found in the cytoplasm. The catalysed reaction is UDP-N-acetyl-alpha-D-muramate + L-alanine + ATP = UDP-N-acetyl-alpha-D-muramoyl-L-alanine + ADP + phosphate + H(+). Its pathway is cell wall biogenesis; peptidoglycan biosynthesis. Cell wall formation. The polypeptide is UDP-N-acetylmuramate--L-alanine ligase (Yersinia pestis (strain Pestoides F)).